A 138-amino-acid polypeptide reads, in one-letter code: Putative nickel-responsive regulator (138 aa).

The Ni(2+) site is built by His78, His89, His91, and Cys97.

The protein belongs to the transcriptional regulatory CopG/NikR family. Ni(2+) is required as a cofactor.

Transcriptional regulator. In Pyrococcus furiosus (strain ATCC 43587 / DSM 3638 / JCM 8422 / Vc1), this protein is Putative nickel-responsive regulator.